Here is a 188-residue protein sequence, read N- to C-terminus: Elongation factor P (188 aa).

The protein belongs to the elongation factor P family.

Its subcellular location is the cytoplasm. It participates in protein biosynthesis; polypeptide chain elongation. Involved in peptide bond synthesis. Stimulates efficient translation and peptide-bond synthesis on native or reconstituted 70S ribosomes in vitro. Probably functions indirectly by altering the affinity of the ribosome for aminoacyl-tRNA, thus increasing their reactivity as acceptors for peptidyl transferase. This Nitrobacter hamburgensis (strain DSM 10229 / NCIMB 13809 / X14) protein is Elongation factor P.